The chain runs to 120 residues: Large ribosomal subunit protein uL18 (120 aa).

Belongs to the universal ribosomal protein uL18 family. In terms of assembly, part of the 50S ribosomal subunit; part of the 5S rRNA/L5/L18/L25 subcomplex. Contacts the 5S and 23S rRNAs.

In terms of biological role, this is one of the proteins that bind and probably mediate the attachment of the 5S RNA into the large ribosomal subunit, where it forms part of the central protuberance. This is Large ribosomal subunit protein uL18 from Sinorhizobium medicae (strain WSM419) (Ensifer medicae).